The following is a 172-amino-acid chain: NAD(P)H-quinone oxidoreductase subunit I, chloroplastic (172 aa).

2 4Fe-4S ferredoxin-type domains span residues 55-84 and 95-124; these read GRIH…VDWK and LNYS…MTEE. The [4Fe-4S] cluster site is built by cysteine 64, cysteine 67, cysteine 70, cysteine 74, cysteine 104, cysteine 107, cysteine 110, and cysteine 114.

It belongs to the complex I 23 kDa subunit family. In terms of assembly, NDH is composed of at least 16 different subunits, 5 of which are encoded in the nucleus. [4Fe-4S] cluster is required as a cofactor.

The protein resides in the plastid. It localises to the chloroplast thylakoid membrane. It catalyses the reaction a plastoquinone + NADH + (n+1) H(+)(in) = a plastoquinol + NAD(+) + n H(+)(out). The enzyme catalyses a plastoquinone + NADPH + (n+1) H(+)(in) = a plastoquinol + NADP(+) + n H(+)(out). In terms of biological role, NDH shuttles electrons from NAD(P)H:plastoquinone, via FMN and iron-sulfur (Fe-S) centers, to quinones in the photosynthetic chain and possibly in a chloroplast respiratory chain. The immediate electron acceptor for the enzyme in this species is believed to be plastoquinone. Couples the redox reaction to proton translocation, and thus conserves the redox energy in a proton gradient. The sequence is that of NAD(P)H-quinone oxidoreductase subunit I, chloroplastic from Olimarabidopsis pumila (Dwarf rocket).